Reading from the N-terminus, the 533-residue chain is Purine-cytosine permease FCY2 (533 aa).

The Cytoplasmic segment spans residues 1-98 (MLEEGNNVYE…NAASMWFSAN (98 aa)). Lysine 16 participates in a covalent cross-link: Glycyl lysine isopeptide (Lys-Gly) (interchain with G-Cter in ubiquitin). Serine 18 carries the phosphoserine modification. A helical transmembrane segment spans residues 99-119 (MVIASYALGALGPMVFGLNFG). Residues 120-121 (QS) are Extracellular-facing. The helical transmembrane segment at 122 to 141 (VLVIIFFNIMGLIFVAFFSV) threads the bilayer. Topologically, residues 142–198 (FGAELGLRQMILSRYLVGNVTARIFSLINVIACVGWGIVNTSVSAQLLNMVNEGSGH) are cytoplasmic. Positions 165-184 (IFSLINVIACVGWGIVNTSV) are surface seeking. The chain crosses the membrane as a helical span at residues 199-218 (VCPIWAGCLIIIGGTVLVTF). The Extracellular portion of the chain corresponds to 219 to 256 (FGYSVIHAYEKWSWVPNFAVFLVIIAQLSRSGKFKGGE). A helical membrane pass occupies residues 257–276 (WVGGATTAGSVLSFGSSIFG). At 277 to 300 (FAAGWTTYAADYTVYMPKSTNKYK) the chain is on the cytoplasmic side. A helical membrane pass occupies residues 301–320 (IFFSLVAGLAFPLFFTMILG). At 321-347 (AASAMAALNDPTWKAYYDKNAMGGVIY) the chain is on the extracellular side. A helical transmembrane segment spans residues 348–367 (AILVPNSLNGFGQFCCVLLA). The Cytoplasmic portion of the chain corresponds to 368-398 (LSTIANNIPNMYTVALSAQALWAPLAKIPRV). Residues 399-418 (VWTMAGNAATLGISIPATYY) form a helical membrane-spanning segment. The Extracellular portion of the chain corresponds to 419-465 (FDGFMENFMDSIGYYLAIYIAISCSEHFFYRRSFSAYNIDDWDNWEH). The helical transmembrane segment at 466 to 485 (LPIGIAGTAALIVGAFGVAL) threads the bilayer. The Cytoplasmic portion of the chain corresponds to 486-533 (GMCQTYWVGEIGRLIGKYGGDIGFELGASWAFIIYNILRPLELKYFGR).

This sequence belongs to the purine-cytosine permease (2.A.39) family. In terms of processing, not N-glycosylated.

It localises to the membrane. Its function is as follows. This permease has a broad specificity towards purines, and also transport cytosine and 5-methylcytosine but neither uracil nor thymine. This chain is Purine-cytosine permease FCY2 (FCY2), found in Saccharomyces cerevisiae (strain ATCC 204508 / S288c) (Baker's yeast).